A 585-amino-acid chain; its full sequence is Vacuolar protein 8 (585 aa).

Residue Gly-2 is the site of N-myristoyl glycine attachment. Residues Cys-4, Cys-5, and Cys-7 are each lipidated (S-palmitoyl cysteine). 9 ARM repeats span residues 39-76 (NRSD…FAEI), 77-116 (TEKD…NLAV), 118-157 (TENK…NLAT), 159-198 (DDNK…NMTH), 200-239 (GENR…NIAV), 243-282 (NRKK…NLAS), 284-323 (SGYQ…NISI), 325-365 (PLNE…NLAA), and 409-448 (DDLK…NLCS). Positions 531 to 562 (QIGQTTTTTTTNITNNNTNTNTNTNTTTSTSN) are enriched in low complexity. Residues 531–565 (QIGQTTTTTTTNITNNNTNTNTNTNTTTSTSNEDQ) are disordered.

This sequence belongs to the beta-catenin family.

The protein localises to the vacuole membrane. Its function is as follows. Functions in both vacuole inheritance and protein targeting from the cytoplasm to vacuole. Vacuole inheritance has a role in the regulation of hyphal cell division. The protein is Vacuolar protein 8 (VAC8) of Candida albicans (strain SC5314 / ATCC MYA-2876) (Yeast).